The following is a 208-amino-acid chain: Imidazole glycerol phosphate synthase subunit HisH (208 aa).

The 206-residue stretch at 1-206 folds into the Glutamine amidotransferase type-1 domain; it reads MFAIVDYDTG…KEMVSANDFS (206 aa). Residue Cys-79 is the Nucleophile of the active site. Catalysis depends on residues His-181 and Glu-183.

In terms of assembly, heterodimer of HisH and HisF.

The protein localises to the cytoplasm. The catalysed reaction is 5-[(5-phospho-1-deoxy-D-ribulos-1-ylimino)methylamino]-1-(5-phospho-beta-D-ribosyl)imidazole-4-carboxamide + L-glutamine = D-erythro-1-(imidazol-4-yl)glycerol 3-phosphate + 5-amino-1-(5-phospho-beta-D-ribosyl)imidazole-4-carboxamide + L-glutamate + H(+). It catalyses the reaction L-glutamine + H2O = L-glutamate + NH4(+). It functions in the pathway amino-acid biosynthesis; L-histidine biosynthesis; L-histidine from 5-phospho-alpha-D-ribose 1-diphosphate: step 5/9. Its function is as follows. IGPS catalyzes the conversion of PRFAR and glutamine to IGP, AICAR and glutamate. The HisH subunit catalyzes the hydrolysis of glutamine to glutamate and ammonia as part of the synthesis of IGP and AICAR. The resulting ammonia molecule is channeled to the active site of HisF. This is Imidazole glycerol phosphate synthase subunit HisH from Lactiplantibacillus plantarum (strain ATCC BAA-793 / NCIMB 8826 / WCFS1) (Lactobacillus plantarum).